We begin with the raw amino-acid sequence, 137 residues long: Competence protein ComGG (137 aa).

The helical transmembrane segment at glycine 10–leucine 30 threads the bilayer. The tract at residues glutamate 106 to serine 137 is disordered.

The transformation pili are flexible filaments, consisting mainly of the major pilin ComGC and smaller amounts of the minor pilins, including at least ComGD, ComGF and ComGG, and perhaps ComGE. Interacts with ComGC; the interaction is probably direct. Interacts with ComGD. Interacts with ComGE. Interacts with ComGF. May act as a link between ComGC, ComGD and ComGF.

The protein localises to the fimbrium. It localises to the cell membrane. Functionally, required for formation of the type IV-like pilus (T4P) that plays a role in transformation. Transformation pili are dynamically extended and retracted, perhaps thereby promoting DNA uptake and transformation. Required for transformation. This Streptococcus pneumoniae (strain ATCC BAA-255 / R6) protein is Competence protein ComGG.